The following is a 386-amino-acid chain: Cysteine protease Amb a 11.0101 (386 aa).

Positions 1–22 (MEINKLVCFSFSLVLILGLVES) are cleaved as a signal peptide. Residues 6–20 (LVCFSFSLVLILGLV) are T-cell epitope. MHC class II peptide able to activate CD(4+) T cells of the ragweed pollen-allergic patients indicated by significantly increased IL-2 production compared to non-allergic individuals. Not recognized by IgE of the patients allergic to ragweed pollen. Positions 23 to 108 (FHYHERELES…SKISHFQALR (86 aa)) are cleaved as a propeptide — activation peptide. An N-linked (GlcNAc...) (complex) asparagine glycan is attached at asparagine 127. Intrachain disulfides connect cysteine 152/cysteine 193, cysteine 186/cysteine 226, and cysteine 283/cysteine 334. Cysteine 155 is an active-site residue. Residues 173-186 (GKLVKFSEQQLVDC) form a B-cell epitope. Binds to IgE of the patients allergic to ragweed pollen region. Active-site residues include histidine 289 and asparagine 310. Residues 340–377 (SSFPIMNDPNPPKDDPNGPKDDPDAPKDPKFKTTQRLQ) are disordered. Residues 350 to 370 (PPKDDPNGPKDDPDAPKDPKF) are compositionally biased toward basic and acidic residues. A propeptide spans 371–386 (KTTQRLQGIRTKLLEL) (removed in mature form).

This sequence belongs to the peptidase C1 family. Homodimer. Post-translationally, autocatalytic proteolytic cleavage of N-terminal activation peptide. In terms of processing, N-glycosylated. Glycosylation is not required for binding to IgE. As to expression, expressed in pollen (at protein and mRNA level).

Activated by L-cysteine. Inhibited by cysteine protease inhibitor E64 (L-trans-epoxysuccinyl-leucylamide-(4-guanido)-butane). Inhibited by cysteine/serine protease inhibitor leupeptin. Not inhibited by serine protease inhibitors 4-(2-aminoethyl)benzenesulfonyl fluoride hydrochloride (AEBSF) and phenylmethanesulfonyl fluoride (PMSF), metallo protease inhibitor bestatin or aspartic protease inhibitor pepstatin A. Functionally, cysteine protease. Hydrolyzes casein and synthetic peptide Boc-Val-Leu-Lys-7-amino-4-methylcoumarin (Boc-VLK-AMC) in vitro. The protein is Cysteine protease Amb a 11.0101 of Ambrosia artemisiifolia (Common ragweed).